We begin with the raw amino-acid sequence, 473 residues long: G2/mitotic-specific cyclin-1 (473 aa).

Over residues 1 to 12 (MGSRNIVQQQNR) the composition is skewed to polar residues. 2 disordered regions span residues 1–23 (MGSR…AMKQ) and 134–155 (KEKP…APTL). Residues 134–147 (KEKPIEKEKAAEKS) are compositionally biased toward basic and acidic residues.

Belongs to the cyclin family. Cyclin AB subfamily. In terms of assembly, interacts with the CDC2 and CDK2 protein kinases to form a serine/threonine kinase holoenzyme complex. The cyclin subunit imparts substrate specificity to the complex.

Functionally, essential for the control of the cell cycle at the G2/M (mitosis) transition. G2/M cyclins accumulate steadily during G2 and are abruptly destroyed at mitosis. The sequence is that of G2/mitotic-specific cyclin-1 from Antirrhinum majus (Garden snapdragon).